A 156-amino-acid chain; its full sequence is MSRRRRSERREVIADPRFGSETLARFVNMLMVSGKKSIAEKIVYGALDHIEAKTSQNSLEVLNKALENVQPVVEVKSRRVGGATYQVPIEVRPARRMALGMRWLIDAARKRGEKGMVMKLAAEVLDAKESRGSAVKKREDTHRMAEANKAFSHYRW.

It belongs to the universal ribosomal protein uS7 family. Part of the 30S ribosomal subunit. Contacts proteins S9 and S11.

Functionally, one of the primary rRNA binding proteins, it binds directly to 16S rRNA where it nucleates assembly of the head domain of the 30S subunit. Is located at the subunit interface close to the decoding center, probably blocks exit of the E-site tRNA. The chain is Small ribosomal subunit protein uS7 from Methylococcus capsulatus (strain ATCC 33009 / NCIMB 11132 / Bath).